The sequence spans 134 residues: GSH-induced LITAF domain protein (134 aa).

The LITAF domain occupies Asp-33–Lys-113. 2 residues coordinate Zn(2+): Cys-53 and Cys-56. The membrane-binding amphipathic helix stretch occupies residues Pro-68–Cys-88. Zn(2+)-binding residues include Cys-101 and Cys-104.

The protein belongs to the CDIP1/LITAF family. As to quaternary structure, interacts (via N- and C-terminal) with MIEL1 and LSD1 (via N-terminus).

The protein resides in the cell membrane. Acts as a membrane anchor, bringing other regulators of programmed cell death (PCD) to the plasma membrane. Negatively regulates hypersensitive cell death. This is GSH-induced LITAF domain protein from Arabidopsis thaliana (Mouse-ear cress).